The primary structure comprises 243 residues: Uridylate kinase (243 aa).

15–18 (KLSG) serves as a coordination point for ATP. Gly-56 contributes to the UMP binding site. Residues Gly-57 and Arg-61 each contribute to the ATP site. 138 to 145 (TGNPYFST) provides a ligand contact to UMP. ATP contacts are provided by Asn-166, Tyr-172, and Asp-175.

This sequence belongs to the UMP kinase family. In terms of assembly, homohexamer.

It is found in the cytoplasm. It carries out the reaction UMP + ATP = UDP + ADP. Its pathway is pyrimidine metabolism; CTP biosynthesis via de novo pathway; UDP from UMP (UMPK route): step 1/1. With respect to regulation, inhibited by UTP. Its function is as follows. Catalyzes the reversible phosphorylation of UMP to UDP. The chain is Uridylate kinase from Mycoplasma genitalium (strain ATCC 33530 / DSM 19775 / NCTC 10195 / G37) (Mycoplasmoides genitalium).